The chain runs to 484 residues: Zinc metalloproteinase homolog-disintegrin albolatin (484 aa).

The first 20 residues, 1–20 (MIQVLLVTICLAVFPYQGSS), serve as a signal peptide directing secretion. Residues 21 to 191 (IILESGNVND…KTSQLNLPLL (171 aa)) constitute a propeptide that is removed on maturation. Residues Asn-80, Asn-251, and Asn-301 are each glycosylated (N-linked (GlcNAc...) asparagine). The 199-residue stretch at 194–392 (RCIELVMVAD…WTSYCLYNEP (199 aa)) folds into the Peptidase M12B domain. Cystine bridges form between Cys-305/Cys-387, Cys-345/Cys-369, Cys-347/Cys-352, Cys-403/Cys-422, Cys-414/Cys-432, Cys-416/Cys-427, Cys-426/Cys-449, Cys-440/Cys-446, Cys-445/Cys-470, and Cys-458/Cys-477. The region spanning 400–484 (PPVCGNYYLE…GDCPWIGYYG (85 aa)) is the Disintegrin domain. The Cell attachment site; atypical (KGD) motif lies at 462–464 (KGD).

It belongs to the venom metalloproteinase (M12B) family. P-II subfamily. P-IIb sub-subfamily. As to quaternary structure, homodimer; disulfide-linked (disintegrin). In terms of tissue distribution, expressed by the venom gland.

Its subcellular location is the secreted. Its function is as follows. The function of this complete protein has not been studied, but it may be similar to the function of the disintegrin domain. A recombinant protein of this domain (409-484) inhibits collagen-induced human platelet aggregation, without having effect on ADP-induced aggregation. It may act either by blocking the binding of fibrinogen to the platelet receptor GPIIb/GPIIIa (ITGA2B/ITGB3) or by blocking the binding of collagen to the integrin alpha-2/beta-1 complex (ITGA2/ITGB1). The sequence is that of Zinc metalloproteinase homolog-disintegrin albolatin from Trimeresurus albolabris (White-lipped pit viper).